A 400-amino-acid chain; its full sequence is 3-phenylpropionate/cinnamic acid dioxygenase ferredoxin--NAD(+) reductase component (400 aa).

5 to 36 (TIIIVGGGQAAAMAAASLRQQGFTGELHLFSD) provides a ligand contact to FAD. 146-174 (SVVIVGAGTIGLELAASATQRGCKVTVIE) lines the NAD(+) pocket.

This sequence belongs to the bacterial ring-hydroxylating dioxygenase ferredoxin reductase family. As to quaternary structure, this dioxygenase system consists of four proteins: the two subunits of the hydroxylase component (HcaE and HcaF), a ferredoxin (HcaC) and a ferredoxin reductase (HcaD). It depends on FAD as a cofactor.

The catalysed reaction is 2 reduced [2Fe-2S]-[ferredoxin] + NAD(+) + H(+) = 2 oxidized [2Fe-2S]-[ferredoxin] + NADH. The protein operates within aromatic compound metabolism; 3-phenylpropanoate degradation. Its function is as follows. Part of the multicomponent 3-phenylpropionate dioxygenase, that converts 3-phenylpropionic acid (PP) and cinnamic acid (CI) into 3-phenylpropionate-dihydrodiol (PP-dihydrodiol) and cinnamic acid-dihydrodiol (CI-dihydrodiol), respectively. This Escherichia coli O17:K52:H18 (strain UMN026 / ExPEC) protein is 3-phenylpropionate/cinnamic acid dioxygenase ferredoxin--NAD(+) reductase component.